The following is a 174-amino-acid chain: Translation initiation factor IF-3 (174 aa).

This sequence belongs to the IF-3 family. Monomer.

It is found in the cytoplasm. IF-3 binds to the 30S ribosomal subunit and shifts the equilibrium between 70S ribosomes and their 50S and 30S subunits in favor of the free subunits, thus enhancing the availability of 30S subunits on which protein synthesis initiation begins. The polypeptide is Translation initiation factor IF-3 (Azorhizobium caulinodans (strain ATCC 43989 / DSM 5975 / JCM 20966 / LMG 6465 / NBRC 14845 / NCIMB 13405 / ORS 571)).